The sequence spans 558 residues: Eukaryotic translation initiation factor 3 subunit D (558 aa).

The tract at residues 296-310 is RNA gate; sequence EFDLLTVNETSVEPP. Residues 534–558 form a disordered region; sequence DNTFESEGEEEDSDEEEQVKDAFQR. A compositionally biased stretch (acidic residues) spans 537–551; the sequence is FESEGEEEDSDEEEQ.

It belongs to the eIF-3 subunit D family. In terms of assembly, component of the eukaryotic translation initiation factor 3 (eIF-3) complex.

The protein localises to the cytoplasm. Its function is as follows. mRNA cap-binding component of the eukaryotic translation initiation factor 3 (eIF-3) complex, which is involved in protein synthesis of a specialized repertoire of mRNAs and, together with other initiation factors, stimulates binding of mRNA and methionyl-tRNAi to the 40S ribosome. The eIF-3 complex specifically targets and initiates translation of a subset of mRNAs involved in cell proliferation. In the eIF-3 complex, eif3d specifically recognizes and binds the 7-methylguanosine cap of a subset of mRNAs. The chain is Eukaryotic translation initiation factor 3 subunit D from Nasonia vitripennis (Parasitic wasp).